Here is a 220-residue protein sequence, read N- to C-terminus: Ribose-5-phosphate isomerase A (220 aa).

Substrate-binding positions include threonine 28 to threonine 31, aspartate 81 to aspartate 84, and lysine 94 to glycine 97. The Proton acceptor role is filled by glutamate 103. Lysine 121 is a binding site for substrate.

This sequence belongs to the ribose 5-phosphate isomerase family. In terms of assembly, homodimer.

It carries out the reaction aldehydo-D-ribose 5-phosphate = D-ribulose 5-phosphate. It functions in the pathway carbohydrate degradation; pentose phosphate pathway; D-ribose 5-phosphate from D-ribulose 5-phosphate (non-oxidative stage): step 1/1. Its function is as follows. Catalyzes the reversible conversion of ribose-5-phosphate to ribulose 5-phosphate. This Yersinia enterocolitica serotype O:8 / biotype 1B (strain NCTC 13174 / 8081) protein is Ribose-5-phosphate isomerase A.